The sequence spans 684 residues: MVFPRLVATGRRGSAGGSDHVVELGLEIESPPCVLYGPPTESAGALLSGLVTVHVQGAGAEAGGCVVARLTLVLEQQVTYGRPFVAGPLGSCAACRERRRELARWEVVAQAAELAGGRHAYPFSHLLAGELPATSTLGSAGATQIRYELVADAVYRAGGGEERRRELRLPVLVTRSILRGPDRNSLRVFPPTDVTATAVLPSVIYPRSTIPLELQLGGVCCADRRWRMRRLTWRIDEKVRVRSHACAAHRARLRALEEEVRAKTARNLKKPAKPIKRTPDMGPQVTVSVATVEDPLPFDAGSAAARQEADVGNMDDDADTQSAFIHPSDHAMQQELQELQARIRQQQLEEERKQETSHYIEEVRTIAGTDIRSGWKSDFSGSGKIELVMEIDCMKLNSGVTNPVNMVSTTSPYLARGQAPVNVTCDVEDPTLGISVNHLLLVEIIVAEEMLHYTNGQLLSKGEAQGEGEGQGEALAEAKPAGLAGSHADQRLAELSPMFANRNNSMFRASAEEHSPGLEPDGSTAGADKRIVGTPTGAARVLRMQFKLTMTERSGLGISWDDEVPPKYQQVKFLYPPSYDEAVSASVSEVSGSSRVVSGPESNPAVRAPVAASPTQPPAVREGPSSLGTSGSAARDMMFISESSTLCIGGESPSALPAVEDASLGHRVCVRKVSELLDTDRITQ.

Disordered regions lie at residues 462-483 (GEAQ…PAGL), 510-531 (SAEE…DKRI), and 593-632 (SSRV…TSGS). Low complexity predominate over residues 593–602 (SSRVVSGPES).

It belongs to the LDB19 family.

The protein resides in the cytoplasm. It localises to the golgi apparatus. May be involved in protein-linked oligosaccharide phosphorylation. The sequence is that of Protein LDB19 (LDB19) from Eremothecium gossypii (strain ATCC 10895 / CBS 109.51 / FGSC 9923 / NRRL Y-1056) (Yeast).